The following is a 356-amino-acid chain: MAPVLKKYKAAAVNAEPGWFNLEESVRRTIHWIDEAGKAGCKFIAFPELWIPGYPYWMWKVNYQESLPLLKKYRENSLPSDSDEMRRIRNAARANKIYVSLGYSEVDLASLYTTQVMISPSGDILNHRRKIRATHVERLVFGDGTGDTTESVIQTDIGRVGHLNCWENMNPFMKAYAASLGEQVHVAAWPLYPGKETLKYPDPFTNVAEANADLVTPAYAIETGTYTLAPWQTITAEGIKLNTPPGKDLEDPHIYNGHGRIFGPDGQNLVPHPDKDFEGLLFVDIDLDECHLSKSLADFGGHYMRPDLIRLLVDTNRKDLVVREDRVNGGVEYTRTVDRVGLSTPLDIANTVDSEN.

The CN hydrolase domain maps to 8-287 (YKAAAVNAEP…EGLLFVDIDL (280 aa)). Glutamate 48 serves as the catalytic Proton acceptor. Lysine 130 is an active-site residue. Catalysis depends on cysteine 165, which acts as the Nucleophile.

It belongs to the carbon-nitrogen hydrolase superfamily. Nitrilase family. Oligomer of dimers, forming left-handed helical fibers.

The catalysed reaction is formamide = hydrogen cyanide + H2O. In terms of biological role, catalyzes the hydration of cyanide to formamide. Degradation of cyanide may be important for plant pathogenic fungi in infection of cyanogenic plants. Can also transform some nitriles like 2-cyanopyridine and fumaronitrile. This Aspergillus niger protein is Cyanide hydratase.